Consider the following 245-residue polypeptide: Glycerophosphodiester phosphodiesterase (245 aa).

The region spanning 2 to 241 (TKIFAHRGFK…DFPDRAVKIR (240 aa)) is the GP-PDE domain. Histidine 7 functions as the Proton acceptor in the catalytic mechanism. 2 residues coordinate a divalent metal cation: glutamate 34 and aspartate 36. Histidine 49 serves as the catalytic Proton donor. Glutamate 110 provides a ligand contact to a divalent metal cation.

The protein belongs to the glycerophosphoryl diester phosphodiesterase family. It depends on Ni(2+) as a cofactor. Co(2+) serves as cofactor. Mn(2+) is required as a cofactor.

The catalysed reaction is a sn-glycero-3-phosphodiester + H2O = an alcohol + sn-glycerol 3-phosphate + H(+). With respect to regulation, inhibited by EDTA and various organic solvents such as chloroform, toluene or benzene. Its function is as follows. Glycerophosphodiester phosphodiesterase hydrolyzes glycerophosphodiesters into glycerol-3-phosphate (G3P) and the corresponding alcohol. Can hydrolyze the model substrate bis-(p-nitrophenyl phosphate) (bis(pNPP)) to p-nitrophenol. Can also catalyze the degradation of diphenyl phosphate (DPHP) to phenyl phosphate (PHP). DPHP is an aryl phosphate ester used as a chemical additive and an industrial catalyst that can easily spread to the environment and exhibits toxicity toward organisms. The polypeptide is Glycerophosphodiester phosphodiesterase (Bacillus altitudinis).